A 295-amino-acid polypeptide reads, in one-letter code: Indole-3-glycerol phosphate synthase (295 aa).

The protein belongs to the TrpC family.

The catalysed reaction is 1-(2-carboxyphenylamino)-1-deoxy-D-ribulose 5-phosphate + H(+) = (1S,2R)-1-C-(indol-3-yl)glycerol 3-phosphate + CO2 + H2O. It participates in amino-acid biosynthesis; L-tryptophan biosynthesis; L-tryptophan from chorismate: step 4/5. This is Indole-3-glycerol phosphate synthase from Prochlorococcus marinus (strain MIT 9215).